Reading from the N-terminus, the 309-residue chain is Probable lipid kinase YegS-like (309 aa).

Residues 1-134 (MTTPRWRLIL…IDLLRVDADG (134 aa)) form the DAGKc domain. Residues threonine 39, 65–71 (GDGTLSA), and threonine 96 contribute to the ATP site. Residues leucine 219, aspartate 222, and leucine 224 each coordinate Mg(2+). Glutamate 280 (proton acceptor) is an active-site residue.

This sequence belongs to the diacylglycerol/lipid kinase family. YegS lipid kinase subfamily. The cofactor is Mg(2+). Requires Ca(2+) as cofactor.

The protein localises to the cytoplasm. Functionally, probably phosphorylates lipids; the in vivo substrate is unknown. This chain is Probable lipid kinase YegS-like, found in Stenotrophomonas maltophilia (strain K279a).